The primary structure comprises 187 residues: Benzene 1,2-dioxygenase subunit beta (187 aa).

It belongs to the bacterial ring-hydroxylating dioxygenase beta subunit family. As to quaternary structure, this dioxygenase system consists of four proteins: the two subunits of the hydroxylase component (BedC1 and BedC2), a ferredoxin (BedB) and a ferredoxin reductase (BedA).

It catalyses the reaction benzene + NADH + O2 + H(+) = cis-1,2-dihydrobenzene-1,2-diol + NAD(+). It functions in the pathway aromatic compound metabolism; benzene degradation; catechol from benzene: step 1/2. Its function is as follows. The beta subunit may be responsible for the substrate specificity of the enzyme. In Pseudomonas putida (Arthrobacter siderocapsulatus), this protein is Benzene 1,2-dioxygenase subunit beta (bedC2).